The following is a 320-amino-acid chain: ATP-dependent 6-phosphofructokinase isozyme 1 (320 aa).

Position 12 (glycine 12) interacts with ATP. Residues 22–26 (RGVVR) and 55–60 (RYSVSD) each bind ADP. Residues 73–74 (RF) and 103–106 (GDGS) contribute to the ATP site. Aspartate 104 is a binding site for Mg(2+). Substrate is bound at residue 126–128 (TID). The active-site Proton acceptor is the aspartate 128. Arginine 155 is a binding site for ADP. Substrate-binding positions include arginine 163 and 170-172 (MGR). ADP contacts are provided by residues 186-188 (GCE), lysine 212, and 214-216 (KKH). Substrate-binding positions include glutamate 223, arginine 244, and 250 to 253 (HIQR).

It belongs to the phosphofructokinase type A (PFKA) family. ATP-dependent PFK group I subfamily. Prokaryotic clade 'B1' sub-subfamily. In terms of assembly, homotetramer. Mg(2+) is required as a cofactor.

Its subcellular location is the cytoplasm. The catalysed reaction is beta-D-fructose 6-phosphate + ATP = beta-D-fructose 1,6-bisphosphate + ADP + H(+). Its pathway is carbohydrate degradation; glycolysis; D-glyceraldehyde 3-phosphate and glycerone phosphate from D-glucose: step 3/4. With respect to regulation, allosterically activated by ADP and other diphosphonucleosides, and allosterically inhibited by phosphoenolpyruvate. Its function is as follows. Catalyzes the phosphorylation of D-fructose 6-phosphate to fructose 1,6-bisphosphate by ATP, the first committing step of glycolysis. The sequence is that of ATP-dependent 6-phosphofructokinase isozyme 1 from Escherichia coli O6:H1 (strain CFT073 / ATCC 700928 / UPEC).